A 181-amino-acid chain; its full sequence is Oligoribonuclease (181 aa).

Residues 8-171 (LIWIDLEMTG…QDIQESIAEL (164 aa)) form the Exonuclease domain. The active site involves Tyr-129.

The protein belongs to the oligoribonuclease family.

Its subcellular location is the cytoplasm. Functionally, 3'-to-5' exoribonuclease specific for small oligoribonucleotides. This Shewanella baltica (strain OS155 / ATCC BAA-1091) protein is Oligoribonuclease.